A 529-amino-acid chain; its full sequence is Peptide chain release factor 3 (529 aa).

The tr-type G domain maps to 11–280; that stretch reads AKRRTFAIIS…GLVEWAPAPM (270 aa). GTP-binding positions include 20-27, 88-92, and 142-145; these read SHPDAGKT, DTPGH, and NKLD.

Belongs to the TRAFAC class translation factor GTPase superfamily. Classic translation factor GTPase family. PrfC subfamily.

It localises to the cytoplasm. Increases the formation of ribosomal termination complexes and stimulates activities of RF-1 and RF-2. It binds guanine nucleotides and has strong preference for UGA stop codons. It may interact directly with the ribosome. The stimulation of RF-1 and RF-2 is significantly reduced by GTP and GDP, but not by GMP. This Citrobacter koseri (strain ATCC BAA-895 / CDC 4225-83 / SGSC4696) protein is Peptide chain release factor 3.